Consider the following 511-residue polypeptide: Glycoprotein (511 aa).

An N-terminal signal peptide occupies residues 1–16; it reads MKCLLCLAFLFIGVNC. The Virion surface segment spans residues 17–467; the sequence is KFTIVFPHNQ…FSGWKSSIAS (451 aa). Positions 18 to 35 are trimerization; the sequence is FTIVFPHNQKGNWKNVPS. 6 disulfide bridges follow: cysteine 40/cysteine 300, cysteine 75/cysteine 108, cysteine 84/cysteine 130, cysteine 169/cysteine 174, cysteine 193/cysteine 240, and cysteine 235/cysteine 269. Positions 53–172 are fusion peptide; the sequence is IGTALQVKMP…QFINGKCSND (120 aa). A glycan (N-linked (GlcNAc...) asparagine; by host) is linked at asparagine 179. The interval 259-309 is trimerization; that stretch reads DLFAAAKFPECPEGSSISAPSQTSVDVSLIQDVERILDYSLCQETWSKIRA. A glycan (N-linked (GlcNAc...) asparagine; by host) is linked at asparagine 336. Residues 383-405 form a trimerization region; sequence EIGPNGVLRTSSGYKFPLYMIGH. Residues 468 to 488 traverse the membrane as a helical segment; that stretch reads FFFIIGLIIGLFLVLRVGIYL. Residue cysteine 489 is the site of S-palmitoyl cysteine; by host attachment. The Intravirion portion of the chain corresponds to 489–511; that stretch reads CIKLKHTRKRKIYADIEMNRLGK. Residues 496–506 carry the basolateral targeting ex vivo motif; it reads RKRKIYADIEM.

This sequence belongs to the vesiculovirus glycoprotein family. As to quaternary structure, homotrimer. Interacts with host LDL at target cell surface. Glycosylated by host. Palmitoylated by host.

The protein resides in the virion membrane. Its subcellular location is the host membrane. In terms of biological role, attaches the virus to host LDL receptors, inducing clathrin-dependent endocytosis of the virion. In the endosome, the acidic pH induces conformational changes in the glycoprotein trimer, which trigger fusion between virus and endosomal membrane. The polypeptide is Glycoprotein (G) (Aedes (Bovine)).